We begin with the raw amino-acid sequence, 278 residues long: Cell division protein FtsQ (278 aa).

Residues 1 to 6 (MNATLR) are Cytoplasmic-facing. Residues 7-27 (ILAWLIAVALVALPVVAVLNG) traverse the membrane as a helical segment. The Periplasmic segment spans residues 28-278 (WVGAERWPLA…SPFAIPGFKT (251 aa)). The 70-residue stretch at 34–103 (WPLARLRVSG…DVLEVHVVEH (70 aa)) folds into the POTRA domain.

It belongs to the FtsQ/DivIB family. FtsQ subfamily. Part of a complex composed of FtsB, FtsL and FtsQ.

Its subcellular location is the cell inner membrane. Essential cell division protein. May link together the upstream cell division proteins, which are predominantly cytoplasmic, with the downstream cell division proteins, which are predominantly periplasmic. May control correct divisome assembly. This Xanthomonas campestris pv. campestris (strain ATCC 33913 / DSM 3586 / NCPPB 528 / LMG 568 / P 25) protein is Cell division protein FtsQ.